We begin with the raw amino-acid sequence, 444 residues long: N-succinylarginine dihydrolase (444 aa).

Residues 19–28, Asn-110, and 137–138 contribute to the substrate site; these read AGLSFGNVAS and HR. Residue Glu-174 is part of the active site. Residue Arg-214 participates in substrate binding. His-250 is an active-site residue. Residues Asp-252 and Asn-362 each contribute to the substrate site. The active-site Nucleophile is Cys-368.

It belongs to the succinylarginine dihydrolase family. As to quaternary structure, homodimer.

It catalyses the reaction N(2)-succinyl-L-arginine + 2 H2O + 2 H(+) = N(2)-succinyl-L-ornithine + 2 NH4(+) + CO2. It participates in amino-acid degradation; L-arginine degradation via AST pathway; L-glutamate and succinate from L-arginine: step 2/5. Functionally, catalyzes the hydrolysis of N(2)-succinylarginine into N(2)-succinylornithine, ammonia and CO(2). The polypeptide is N-succinylarginine dihydrolase (Shewanella putrefaciens (strain CN-32 / ATCC BAA-453)).